Here is a 185-residue protein sequence, read N- to C-terminus: Elongation factor P (185 aa).

This sequence belongs to the elongation factor P family.

The protein resides in the cytoplasm. It participates in protein biosynthesis; polypeptide chain elongation. In terms of biological role, involved in peptide bond synthesis. Stimulates efficient translation and peptide-bond synthesis on native or reconstituted 70S ribosomes in vitro. Probably functions indirectly by altering the affinity of the ribosome for aminoacyl-tRNA, thus increasing their reactivity as acceptors for peptidyl transferase. This Acaryochloris marina (strain MBIC 11017) protein is Elongation factor P.